The sequence spans 120 residues: MRTRSVDQDSKLCFFKALGLRPQEPLRRVACSVANKCAAKQYKRFKGVADIKRELGRFNLPPAQFNEALYLCRRHNAAWCTTDNWDRCGSVNERHVYEVDFDAQTKAVTERFYVCVQCFV.

Its subcellular location is the virion. This Orgyia pseudotsugata (Douglas-fir tussock moth) protein is Putative 15 kDa capsid protein (P15).